The sequence spans 761 residues: Subtilisin-like protease SBT3.15 (761 aa).

The N-terminal stretch at 1 to 21 is a signal peptide; the sequence is MENSFLSSKLVFLLAIALVLF. The propeptide at 22-120 is activation peptide; it reads LNTELSFLTA…VIPNRILKLK (99 aa). In terms of domain architecture, Inhibitor I9 spans 41-119; sequence VYIVYLGQRE…HVIPNRILKL (79 aa). Residues 134 to 613 form the Peptidase S8 domain; the sequence is PTSFSSSSSA…GGLVNPEKAA (480 aa). A glycan (N-linked (GlcNAc...) asparagine) is linked at Asn-151. Asp-164 (charge relay system) is an active-site residue. The N-linked (GlcNAc...) asparagine glycan is linked to Asn-197. Residue His-241 is the Charge relay system of the active site. Residues Asn-256 and Asn-384 are each glycosylated (N-linked (GlcNAc...) asparagine). Ser-544 acts as the Charge relay system in catalysis. N-linked (GlcNAc...) asparagine glycosylation is present at Asn-636.

The protein belongs to the peptidase S8 family.

It localises to the secreted. The sequence is that of Subtilisin-like protease SBT3.15 from Arabidopsis thaliana (Mouse-ear cress).